Here is a 156-residue protein sequence, read N- to C-terminus: Phosphopantetheine adenylyltransferase (156 aa).

Residue Thr-9 coordinates substrate. ATP contacts are provided by residues 9-10 and His-17; that span reads TF. Substrate contacts are provided by Lys-41, Leu-73, and Arg-87. Residues 88 to 90, Glu-98, and 123 to 129 contribute to the ATP site; these read GVR and WVFVSST.

It belongs to the bacterial CoaD family. As to quaternary structure, homohexamer. Mg(2+) serves as cofactor.

It localises to the cytoplasm. It carries out the reaction (R)-4'-phosphopantetheine + ATP + H(+) = 3'-dephospho-CoA + diphosphate. It functions in the pathway cofactor biosynthesis; coenzyme A biosynthesis; CoA from (R)-pantothenate: step 4/5. Reversibly transfers an adenylyl group from ATP to 4'-phosphopantetheine, yielding dephospho-CoA (dPCoA) and pyrophosphate. This chain is Phosphopantetheine adenylyltransferase, found in Haemophilus influenzae (strain PittEE).